The sequence spans 563 residues: Ribulokinase (563 aa).

It belongs to the ribulokinase family.

The catalysed reaction is D-ribulose + ATP = D-ribulose 5-phosphate + ADP + H(+). It carries out the reaction L-ribulose + ATP = L-ribulose 5-phosphate + ADP + H(+). Its pathway is carbohydrate degradation; L-arabinose degradation via L-ribulose; D-xylulose 5-phosphate from L-arabinose (bacterial route): step 2/3. This chain is Ribulokinase, found in Mycolicibacterium smegmatis (Mycobacterium smegmatis).